A 480-amino-acid polypeptide reads, in one-letter code: Aspartyl/glutamyl-tRNA(Asn/Gln) amidotransferase subunit B (480 aa).

This sequence belongs to the GatB/GatE family. GatB subfamily. Heterotrimer of A, B and C subunits.

It carries out the reaction L-glutamyl-tRNA(Gln) + L-glutamine + ATP + H2O = L-glutaminyl-tRNA(Gln) + L-glutamate + ADP + phosphate + H(+). It catalyses the reaction L-aspartyl-tRNA(Asn) + L-glutamine + ATP + H2O = L-asparaginyl-tRNA(Asn) + L-glutamate + ADP + phosphate + 2 H(+). In terms of biological role, allows the formation of correctly charged Asn-tRNA(Asn) or Gln-tRNA(Gln) through the transamidation of misacylated Asp-tRNA(Asn) or Glu-tRNA(Gln) in organisms which lack either or both of asparaginyl-tRNA or glutaminyl-tRNA synthetases. The reaction takes place in the presence of glutamine and ATP through an activated phospho-Asp-tRNA(Asn) or phospho-Glu-tRNA(Gln). This is Aspartyl/glutamyl-tRNA(Asn/Gln) amidotransferase subunit B from Streptococcus pneumoniae (strain ATCC 700669 / Spain 23F-1).